We begin with the raw amino-acid sequence, 46 residues long: Large ribosomal subunit protein bL36B (46 aa).

It belongs to the bacterial ribosomal protein bL36 family.

The chain is Large ribosomal subunit protein bL36B from Enterobacter sp. (strain 638).